We begin with the raw amino-acid sequence, 892 residues long: Alanine--tRNA ligase (892 aa).

Residues histidine 580, histidine 584, cysteine 682, and histidine 686 each contribute to the Zn(2+) site.

Belongs to the class-II aminoacyl-tRNA synthetase family. Requires Zn(2+) as cofactor.

The protein resides in the cytoplasm. It catalyses the reaction tRNA(Ala) + L-alanine + ATP = L-alanyl-tRNA(Ala) + AMP + diphosphate. Functionally, catalyzes the attachment of alanine to tRNA(Ala) in a two-step reaction: alanine is first activated by ATP to form Ala-AMP and then transferred to the acceptor end of tRNA(Ala). Also edits incorrectly charged Ser-tRNA(Ala) and Gly-tRNA(Ala) via its editing domain. This Salinispora tropica (strain ATCC BAA-916 / DSM 44818 / JCM 13857 / NBRC 105044 / CNB-440) protein is Alanine--tRNA ligase.